Here is a 334-residue protein sequence, read N- to C-terminus: Ornithine carbamoyltransferase (334 aa).

Carbamoyl phosphate-binding positions include 57–60 (STRT), glutamine 84, arginine 108, and 135–138 (HPTQ). L-ornithine contacts are provided by residues asparagine 169, aspartate 233, and 237 to 238 (SM). Carbamoyl phosphate-binding positions include 275-276 (CL) and arginine 320.

This sequence belongs to the aspartate/ornithine carbamoyltransferase superfamily. OTCase family.

It localises to the cytoplasm. The catalysed reaction is carbamoyl phosphate + L-ornithine = L-citrulline + phosphate + H(+). The protein operates within amino-acid biosynthesis; L-arginine biosynthesis; L-arginine from L-ornithine and carbamoyl phosphate: step 1/3. Its function is as follows. Reversibly catalyzes the transfer of the carbamoyl group from carbamoyl phosphate (CP) to the N(epsilon) atom of ornithine (ORN) to produce L-citrulline. In Aliivibrio fischeri (strain ATCC 700601 / ES114) (Vibrio fischeri), this protein is Ornithine carbamoyltransferase.